Here is a 216-residue protein sequence, read N- to C-terminus: Probable nicotinate-nucleotide adenylyltransferase (216 aa).

The protein belongs to the NadD family.

The enzyme catalyses nicotinate beta-D-ribonucleotide + ATP + H(+) = deamido-NAD(+) + diphosphate. It participates in cofactor biosynthesis; NAD(+) biosynthesis; deamido-NAD(+) from nicotinate D-ribonucleotide: step 1/1. Its function is as follows. Catalyzes the reversible adenylation of nicotinate mononucleotide (NaMN) to nicotinic acid adenine dinucleotide (NaAD). The polypeptide is Probable nicotinate-nucleotide adenylyltransferase (Shewanella baltica (strain OS185)).